The chain runs to 98 residues: Large ribosomal subunit protein uL23 (98 aa).

This sequence belongs to the universal ribosomal protein uL23 family. In terms of assembly, part of the 50S ribosomal subunit. Contacts protein L29, and trigger factor when it is bound to the ribosome.

Functionally, one of the early assembly proteins it binds 23S rRNA. One of the proteins that surrounds the polypeptide exit tunnel on the outside of the ribosome. Forms the main docking site for trigger factor binding to the ribosome. In Cellvibrio japonicus (strain Ueda107) (Pseudomonas fluorescens subsp. cellulosa), this protein is Large ribosomal subunit protein uL23.